Consider the following 246-residue polypeptide: Bis(5'-nucleosyl)-tetraphosphatase PrpE [asymmetrical] (246 aa).

It belongs to the PrpE family. Requires Ni(2+) as cofactor.

The catalysed reaction is P(1),P(4)-bis(5'-guanosyl) tetraphosphate + H2O = GMP + GTP + 2 H(+). Functionally, asymmetrically hydrolyzes Ap4p to yield AMP and ATP. This is Bis(5'-nucleosyl)-tetraphosphatase PrpE [asymmetrical] from Bacillus thuringiensis subsp. konkukian (strain 97-27).